The following is a 390-amino-acid chain: S-adenosylmethionine synthase (390 aa).

Glutamate 12 lines the Mg(2+) pocket. Histidine 18 serves as a coordination point for ATP. Glutamate 46 contributes to the K(+) binding site. Residues glutamate 59 and glutamine 102 each coordinate L-methionine. ATP-binding positions include 170–172, 238–241, aspartate 249, 255–256, alanine 272, lysine 276, and lysine 280; these read DGK, SGRF, and RK. Position 249 (aspartate 249) interacts with L-methionine. Position 280 (lysine 280) interacts with L-methionine.

It belongs to the AdoMet synthase family. As to quaternary structure, homotetramer. Requires Mn(2+) as cofactor. Mg(2+) serves as cofactor. It depends on Co(2+) as a cofactor. The cofactor is K(+).

The protein resides in the cytoplasm. The enzyme catalyses L-methionine + ATP + H2O = S-adenosyl-L-methionine + phosphate + diphosphate. It functions in the pathway amino-acid biosynthesis; S-adenosyl-L-methionine biosynthesis; S-adenosyl-L-methionine from L-methionine: step 1/1. Functionally, catalyzes the formation of S-adenosylmethionine from methionine and ATP. The reaction comprises two steps that are both catalyzed by the same enzyme: formation of S-adenosylmethionine (AdoMet) and triphosphate, and subsequent hydrolysis of the triphosphate. The chain is S-adenosylmethionine synthase (METM) from Chlamydomonas reinhardtii (Chlamydomonas smithii).